The primary structure comprises 393 residues: SH3 domain-binding protein 5-like (393 aa).

Positions 1–58 (MAELRQVPGGRETPQGELRPEVVEDEVPRSPVAEEPGGGGSSSSEAKLSPREEEELDP) are disordered. Phosphothreonine is present on threonine 13. Basic and acidic residues predominate over residues 18–28 (LRPEVVEDEVP). A phosphoserine mark is found at serine 30 and serine 49. Coiled coils occupy residues 59–140 (RIQE…YERA) and 169–272 (WQEM…EQIH). The disordered stretch occupies residues 273 to 332 (ARRRGGLPPHPLGPRRSSPVGAEAGPEDMEDGDSGIEGAEGAGLEEGSSLGPGPAPDTDT). Positions 297–306 (GPEDMEDGDS) are enriched in acidic residues. Residues 317 to 332 (EEGSSLGPGPAPDTDT) show a composition bias toward low complexity. A phosphoserine mark is found at serine 343, serine 350, serine 358, serine 362, and serine 378. The tract at residues 362-393 (SLDGQELGTRSGGRRGSDGGARGGRHQRSVSL) is disordered. Residues 384–393 (GGRHQRSVSL) show a composition bias toward basic residues.

It belongs to the SH3BP5 family.

Functionally, functions as a guanine nucleotide exchange factor (GEF) for RAB11A. The polypeptide is SH3 domain-binding protein 5-like (SH3BP5L) (Homo sapiens (Human)).